Consider the following 263-residue polypeptide: Mannose-specific lectin 2 (263 aa).

Residues 1 to 24 (MAKSLVLSSLLLALLLAAPLASLA) form the signal peptide. 2 consecutive Bulb-type lectin domains span residues 26–136 (NNVL…APNR) and 150–260 (RNVL…SSAS). Disulfide bonds link Cys-54-Cys-76 and Cys-178-Cys-203.

Heterotetramer of 2 domain 1 and 2 domain 2 chains arranged as a dimer of domain 1/domain 2 heterodimers.

Its function is as follows. Mannose-specific lectin. Has weak agglutinating activity towards trypsin-treated erythrocytes from rabbit but not from human. The sequence is that of Mannose-specific lectin 2 from Crocus vernus (Dutch crocus).